Reading from the N-terminus, the 311-residue chain is tRNA dimethylallyltransferase 2 (311 aa).

15 to 22 (GPTAVGKT) is a binding site for ATP. 17–22 (TAVGKT) contacts substrate. The tract at residues 40–43 (DSMQ) is interaction with substrate tRNA.

Belongs to the IPP transferase family. As to quaternary structure, monomer. Mg(2+) serves as cofactor.

It carries out the reaction adenosine(37) in tRNA + dimethylallyl diphosphate = N(6)-dimethylallyladenosine(37) in tRNA + diphosphate. Its function is as follows. Catalyzes the transfer of a dimethylallyl group onto the adenine at position 37 in tRNAs that read codons beginning with uridine, leading to the formation of N6-(dimethylallyl)adenosine (i(6)A). The sequence is that of tRNA dimethylallyltransferase 2 from Syntrophus aciditrophicus (strain SB).